We begin with the raw amino-acid sequence, 259 residues long: Small ribosomal subunit protein eS1 (259 aa).

It belongs to the eukaryotic ribosomal protein eS1 family. In terms of assembly, component of the small ribosomal subunit. Mature ribosomes consist of a small (40S) and a large (60S) subunit. The 40S subunit contains about 33 different proteins and 1 molecule of RNA (18S). The 60S subunit contains about 49 different proteins and 3 molecules of RNA (25S, 5.8S and 5S).

It localises to the cytoplasm. In Monosiga brevicollis (Choanoflagellate), this protein is Small ribosomal subunit protein eS1.